We begin with the raw amino-acid sequence, 381 residues long: Terpene cyclase ATR13 (381 aa).

It belongs to the terpene synthase family.

It participates in mycotoxin biosynthesis. In terms of biological role, terpene cyclase; part of the core atranone cluster (CAC) which products are predicted to catalyze most or all steps of mycotoxin atranone synthesis, starting from geranylgeranyl pyrophosphate (GGPP). The initial cyclization of GGPP to dolabellane is probably performed by the terpene cyclase ATR13. The Baeyer-Villiger oxidation near the end of the atranone synthesis, which converts atranones D and E to atranones F and G is predicted to be catalyzed by the monooxygenase ATR8. Of the CAC's other predicted gene products, the reducing PKS ATR6 might synthesize a polyketide chain. This polyketide is probably transferred onto the atranone backbone by the polyketide transferase ATR5. Other predicted CAC products include 4 oxygenases (ATR2, ATR3, ATR4, and ATR14), 3 short-chain reductases (ATR7, ATR9, and ATR10), and a methyltransferase (ATR12). These may all be involved in the various steps of atranone biosynthesis, although their specific roles must await experimental determination. In Stachybotrys chlorohalonatus (strain IBT 40285), this protein is Terpene cyclase ATR13.